We begin with the raw amino-acid sequence, 245 residues long: Complement C1q subcomponent subunit A (245 aa).

Residues 1–22 (METSQGWLVACVLAVTLVWTVA) form the signal peptide. The Collagen-like domain maps to 31-109 (GKDGVAGIPG…KGVKGNPGNI (79 aa)). The disordered stretch occupies residues 35 to 111 (VAGIPGRPGR…VKGNPGNIRD (77 aa)). 4-hydroxyproline is present on residues Pro-39 and Pro-45. Lys-48 carries the post-translational modification 5-hydroxylysine. An O-linked (Gal...) hydroxylysine glycan is attached at Lys-48. Position 54 is a 4-hydroxyproline (Pro-54). At Lys-67 the chain carries 5-hydroxylysine. Lys-67 is a glycosylation site (O-linked (Gal...) hydroxylysine). A 4-hydroxyproline mark is found at Pro-79 and Pro-85. A 5-hydroxylysine modification is found at Lys-100. The O-linked (Gal...) hydroxylysine glycan is linked to Lys-100. Residues 110–245 (RDQPRPAFSA…FSGFLIFPSA (136 aa)) enclose the C1q domain. A glycan (N-linked (GlcNAc...) asparagine) is linked at Asn-146. A disulfide bond links Cys-172 and Cys-190. Gln-199 contributes to the Ca(2+) binding site.

Core component of the complement C1 complex, a calcium-dependent complex composed of 1 molecule of the C1Q subcomplex, 2 molecules of C1R and 2 molecules of C1S. The C1Q subcomplex is composed 18 subunits: 3 chains of C1QA, C1QB, and C1QC trimerize to form 6 collagen-like triple helices connected to six globular ligand-recognition modules (C1q domain). Interacts with CR1 (via Sushi 24 and Sushi 25 domains). Interacts (via C-terminus) with CD33; this interaction activates CD33 inhibitory motifs. Post-translationally, O-linked glycans are assumed to be the Glc-Gal disaccharides typically found as secondary modifications of hydroxylated lysines in collagen-like domains.

It localises to the secreted. The protein localises to the cell surface. Its activity is regulated as follows. The C1Q subcomplex is inhibited by sulfated molecules, such as triterpenoid sulfates, heparan sulfate, or chondroitin sulfates. Core component of the complement C1 complex, a multiprotein complex that initiates the classical pathway of the complement system, a cascade of proteins that leads to phagocytosis and breakdown of pathogens and signaling that strengthens the adaptive immune system. The classical complement pathway is initiated by the C1Q subcomplex of the C1 complex, which specifically binds IgG or IgM immunoglobulins complexed with antigens, forming antigen-antibody complexes on the surface of pathogens: C1QA, together with C1QB and C1QC, specifically recognizes and binds the Fc regions of IgG or IgM via its C1q domain. Immunoglobulin-binding activates the proenzyme C1R, which cleaves C1S, initiating the proteolytic cascade of the complement system. The C1Q subcomplex is activated by a hexamer of IgG complexed with antigens, while it is activated by a pentameric IgM. The C1Q subcomplex also recognizes and binds phosphatidylserine exposed on the surface of cells undergoing programmed cell death, possibly promoting activation of the complement system. This chain is Complement C1q subcomponent subunit A, found in Rattus norvegicus (Rat).